The sequence spans 141 residues: MAIERTLSIIKPDAVAKNVIGQIYSRFEGAGLKIIAARMAQLSRAEAEGFYAVHSARPFFKDLVDFMISGPVMIQVLEGENAIAKHRDLMGATDPKKAEKGTIRADFADSIDANAVHGSDAEETAKVEIAYYFPALNVYSR.

The ATP site is built by Lys11, Phe59, Arg87, Thr93, Arg104, and Asn114. Residue His117 is the Pros-phosphohistidine intermediate of the active site.

This sequence belongs to the NDK family. In terms of assembly, homotetramer. Requires Mg(2+) as cofactor.

It is found in the cytoplasm. The catalysed reaction is a 2'-deoxyribonucleoside 5'-diphosphate + ATP = a 2'-deoxyribonucleoside 5'-triphosphate + ADP. It carries out the reaction a ribonucleoside 5'-diphosphate + ATP = a ribonucleoside 5'-triphosphate + ADP. Functionally, major role in the synthesis of nucleoside triphosphates other than ATP. The ATP gamma phosphate is transferred to the NDP beta phosphate via a ping-pong mechanism, using a phosphorylated active-site intermediate. This is Nucleoside diphosphate kinase from Herminiimonas arsenicoxydans.